The chain runs to 130 residues: Type VII secretion system extracellular protein C (130 aa).

The protein belongs to the EsxC family. Forms both homodimers and heterodimers with EsxA. Homodimerization is calcium-dependent.

It localises to the secreted. Functionally, implements its pathogenic function during infection. The polypeptide is Type VII secretion system extracellular protein C (Staphylococcus aureus (strain Mu50 / ATCC 700699)).